The sequence spans 318 residues: Protease HtpX homolog (318 aa).

Helical transmembrane passes span 6–26 and 28–48; these read TAMLLAFMTALFMFVGFLIGG and AGMMIAFLIAAGMNFFSYWNS. Histidine 130 is a Zn(2+) binding site. Glutamate 131 is a catalytic residue. Residue histidine 134 participates in Zn(2+) binding. A run of 2 helical transmembrane segments spans residues 145 to 165 and 173 to 193; these read ITATLAGAISMLGNFAFFFGG and PLGFVGVLVAMIVAPLAAMLV. Glutamate 202 is a binding site for Zn(2+). A disordered region spans residues 284-318; sequence NVSTGPVRAVNPTRKSRSVPNTGRGGSQPPRGPWS.

The protein belongs to the peptidase M48B family. It depends on Zn(2+) as a cofactor.

Its subcellular location is the cell inner membrane. This is Protease HtpX homolog from Rhizobium etli (strain CIAT 652).